We begin with the raw amino-acid sequence, 449 residues long: Alginate biosynthesis transcriptional regulatory protein AlgB (449 aa).

Residues 10–124 (RILLVDDESA…QLRLAAAKQL (115 aa)) enclose the Response regulatory domain. Residue Asp59 is modified to 4-aspartylphosphate. The 230-residue stretch at 147 to 376 (LESHSPAMAA…LRNVIERASI (230 aa)) folds into the Sigma-54 factor interaction domain. ATP-binding positions include 175–182 (GESGSGKG) and 238–247 (ADGGTLFLDE). Positions 426–445 (LDQAAKTLGIDASTLYRKRK) form a DNA-binding region, H-T-H motif.

Phosphorylated by KinB.

It participates in glycan biosynthesis; alginate biosynthesis [regulation]. Member of the two-component regulatory system AlgB/KinB involved in regulation of alginate biosynthesis genes. Positive regulator of the alginate biosynthetic gene AlgD. The protein is Alginate biosynthesis transcriptional regulatory protein AlgB (algB) of Pseudomonas aeruginosa (strain ATCC 15692 / DSM 22644 / CIP 104116 / JCM 14847 / LMG 12228 / 1C / PRS 101 / PAO1).